The sequence spans 866 residues: Retinoblastoma-related protein 2 (866 aa).

Positions 274 to 475 are domain A; it reads TPITSAMTTA…EKGSSLYNSL (202 aa). A pocket region spans residues 274–721; sequence TPITSAMTTA…NEVFVPAAKP (448 aa). The spacer stretch occupies residues 476 to 593; it reads IVARPSVASE…PVGGNEKCAD (118 aa). Residues 513-551 are disordered; it reads LPATPSKKRAAGRDDNADPRSPKRPCNESRSPVVEHNLQ. The segment covering 523-539 has biased composition (basic and acidic residues); the sequence is AGRDDNADPRSPKRPCN. Residues 594-721 are domain B; sequence VTIQIFFSKI…NEVFVPAAKP (128 aa). 2 disordered regions span residues 731 to 754 and 839 to 866; these read TRPE…PFPN and SLGQ…KPDT. The segment covering 841-850 has biased composition (polar residues); that stretch reads GQPNGGSTSL.

The protein belongs to the retinoblastoma protein (RB) family. Ubiquitous.

It localises to the nucleus. Functionally, regulator of biological processes that recruits a histone deacetylase to control gene transcription. May play a role in the entry into mitosis, negatively regulating the cell proliferation. Formation of stable complexes with geminiviridae replication-associated proteins may create a cellular environment which favors viral DNA replication. This is Retinoblastoma-related protein 2 (RBR2) from Zea mays (Maize).